An 886-amino-acid chain; its full sequence is uncharacterized protein (886 aa).

An N-terminal signal peptide occupies residues 1 to 20 (MKILKSLVLLVLFIVMPAKA). Helical transmembrane passes span 520–540 (VIIFGLMFVAGTLKLTAIEVI), 563–583 (TYFFSVFTDGIDFFITNVVGA), 609–629 (LLFIELLQIHNGLAFIAIITI), 647–667 (IIAFIGVTVMISLAPFFIILM), 680–700 (ISTLLSYVVQPTILLIFFLLI), and 771–791 (FLVLFTTALLFYVYCLMSYGL).

The protein belongs to the TrbL/VirB6 family.

The protein localises to the cell membrane. This is an uncharacterized protein from Rickettsia typhi (strain ATCC VR-144 / Wilmington).